Consider the following 850-residue polypeptide: RPA-related protein RADX (850 aa).

A disordered region spans residues 1 to 31 (MSGESGQPQPGPSHAGLYLEHPERDQAGVPG). Residues 228 to 331 (WNSRKNFPAL…LISTMEICLN (104 aa)) constitute a DNA-binding region (OB). Disordered regions lie at residues 575 to 612 (EAFW…MGSQ) and 632 to 671 (GPSA…GKSR). Residues 590-608 (GKEDHCHERGSKRSQDDRP) show a composition bias toward basic and acidic residues. Positions 643 to 668 (PHSSAQMKGSKHNTPSQESSTAYTTG) are enriched in polar residues.

The protein resides in the chromosome. Single-stranded DNA-binding protein recruited to replication forks to maintain genome stability. Prevents fork collapse by antagonizing the accumulation of RAD51 at forks to ensure the proper balance of fork remodeling and protection without interfering with the capacity of cells to complete homologous recombination of double-strand breaks. This Mus musculus (Mouse) protein is RPA-related protein RADX.